Reading from the N-terminus, the 156-residue chain is Succinate dehydrogenase [ubiquinone] cytochrome b small subunit 1, mitochondrial (156 aa).

The N-terminal 25 residues, 1 to 25 (MLSAVRRAIPLSARILRTSLIQRCA), are a transit peptide targeting the mitochondrion. Over 26-59 (GATSAAVTGAAPPQFDPIAAEKGFKPLHSHGTLF) the chain is Mitochondrial matrix. Residues 60–78 (KIERYFAAAMVPLIPAAYF) form a helical membrane-spanning segment. The Mitochondrial intermembrane portion of the chain corresponds to 79 to 83 (IHGRE). A helical transmembrane segment spans residues 84 to 104 (MDLCLALALTLHVHWGVWGVV). Histidine 95 is a heme b binding site. Residues 105–119 (NDYGRPFVLGDTLAA) are Mitochondrial matrix-facing. A rhodoquinol is bound at residue tyrosine 107. A helical membrane pass occupies residues 120–141 (AVRVGAYIFTACLLAGLLYFNE). Topologically, residues 142–156 (HDVGLTRAFEMVWEL) are mitochondrial intermembrane.

Belongs to the CybS family. Component of the mitochondrial electron transport chain complex II composed of four subunits: a flavoprotein (Fp), an iron-sulfur protein (Ip), and a large cytochrome b (CybL) subunit and a small cytochrome b (CybS) subunit. There are 2 developmental stage-specific forms of complex II which have the Ip and CybL subunits in common. Complex II from the free-living larvae (aerobic environment) acts as a succinate dehydrogenase and is composed of the common subunit Ip and CybL and the stage specific subunits FpL and CybSL. Complex II from parasitic larvae and adults (anaerobic environment) acts as a fumarate reductase and is composed of the common subunit Ip and CybL and the stage specific subunits FpA and CybSA. Heme b is required as a cofactor. Expressed in adult muscles (at protein level).

It localises to the mitochondrion inner membrane. In terms of biological role, membrane-bound small subunit (CybS) of the mitochondrial electron transport chain complex II, which together with the membrane-bound large subunit (CybL), anchor the catalytic subunits to the inner mitochondria membrane. During the parasitic larvae and adult stages, which occur in an anaerobic environment, complex II acts as a fumarate reductase by transferring electrons from rhodoquinol to fumarate. This is Succinate dehydrogenase [ubiquinone] cytochrome b small subunit 1, mitochondrial from Ascaris suum (Pig roundworm).